We begin with the raw amino-acid sequence, 820 residues long: Quinate repressor protein (820 aa).

The disordered stretch occupies residues 25–79 (SFEQMLLQQDSNESSRRTSPSRTHSRVDLERHSSHIVSLSSSNGSPSLEDPENRL). Low complexity predominate over residues 59–71 (HIVSLSSSNGSPS).

The protein in the N-terminal section; belongs to the shikimate kinase family. In the 2nd section; belongs to the type-I 3-dehydroquinase family. This sequence in the C-terminal section; belongs to the shikimate dehydrogenase family. In terms of assembly, interacts with qutA; transcriptional activator of the quinate utilization pathway genes.

In terms of biological role, multi-domain repressor protein that negatively regulates transcription of the quinate utilization pathway genes. May mediate its repressor activity by binding directly to the qutA activator protein. The chain is Quinate repressor protein (qutR) from Talaromyces stipitatus (strain ATCC 10500 / CBS 375.48 / QM 6759 / NRRL 1006) (Penicillium stipitatum).